A 615-amino-acid chain; its full sequence is UvrABC system protein C (615 aa).

A GIY-YIG domain is found at 14–91 (TSPGCYIHKD…IKENKPKYNI (78 aa)). In terms of domain architecture, UVR spans 196-231 (NKIIDELKGKMAAAAQTMEFERAAEYRDLIQAIGTL).

The protein belongs to the UvrC family. As to quaternary structure, interacts with UvrB in an incision complex.

It localises to the cytoplasm. Functionally, the UvrABC repair system catalyzes the recognition and processing of DNA lesions. UvrC both incises the 5' and 3' sides of the lesion. The N-terminal half is responsible for the 3' incision and the C-terminal half is responsible for the 5' incision. The sequence is that of UvrABC system protein C from Streptococcus pneumoniae (strain JJA).